Reading from the N-terminus, the 129-residue chain is Small ribosomal subunit protein uS9 (129 aa).

The span at 104-113 shows a compositional bias: basic and acidic residues; that stretch reads TRDSRVVERK. The segment at 104 to 129 is disordered; it reads TRDSRVVERKKPGKRKARRSRQFSKR. Over residues 114–129 the composition is skewed to basic residues; it reads KPGKRKARRSRQFSKR.

It belongs to the universal ribosomal protein uS9 family.

This is Small ribosomal subunit protein uS9 from Sulfurimonas denitrificans (strain ATCC 33889 / DSM 1251) (Thiomicrospira denitrificans (strain ATCC 33889 / DSM 1251)).